A 528-amino-acid chain; its full sequence is Probable rhamnogalacturonate lyase A (528 aa).

An N-terminal signal peptide occupies residues 1–20; the sequence is MLSRTILFSTSFLWVRVANA. Intrachain disulfides connect Cys-50–Cys-93 and Cys-184–Cys-193.

Belongs to the polysaccharide lyase 4 family.

It is found in the secreted. It carries out the reaction Endotype eliminative cleavage of L-alpha-rhamnopyranosyl-(1-&gt;4)-alpha-D-galactopyranosyluronic acid bonds of rhamnogalacturonan I domains in ramified hairy regions of pectin leaving L-rhamnopyranose at the reducing end and 4-deoxy-4,5-unsaturated D-galactopyranosyluronic acid at the non-reducing end.. Functionally, pectinolytic enzymes consist of four classes of enzymes: pectin lyase, polygalacturonase, pectin methylesterase and rhamnogalacturonase. Degrades the rhamnogalacturonan I (RG-I) backbone of pectin. In Aspergillus flavus (strain ATCC 200026 / FGSC A1120 / IAM 13836 / NRRL 3357 / JCM 12722 / SRRC 167), this protein is Probable rhamnogalacturonate lyase A (rglA).